An 871-amino-acid chain; its full sequence is Alanine--tRNA ligase (871 aa).

Residues His561, His565, Cys665, and His669 each contribute to the Zn(2+) site.

It belongs to the class-II aminoacyl-tRNA synthetase family. Zn(2+) is required as a cofactor.

The protein localises to the cytoplasm. The enzyme catalyses tRNA(Ala) + L-alanine + ATP = L-alanyl-tRNA(Ala) + AMP + diphosphate. Its function is as follows. Catalyzes the attachment of alanine to tRNA(Ala) in a two-step reaction: alanine is first activated by ATP to form Ala-AMP and then transferred to the acceptor end of tRNA(Ala). Also edits incorrectly charged Ser-tRNA(Ala) and Gly-tRNA(Ala) via its editing domain. In Dehalococcoides mccartyi (strain ATCC BAA-2100 / JCM 16839 / KCTC 5957 / BAV1), this protein is Alanine--tRNA ligase.